Here is a 149-residue protein sequence, read N- to C-terminus: Calmodulin (149 aa).

Residue A2 is modified to N-acetylalanine. EF-hand domains follow at residues 8-43 (EQIAEFKEAFSLFDKDGDGTITTKELGTVMRSLGQN), 44-79 (PTEAELQDMINEVDSDGNGTIDFPEFLSLMARKMKD), 81-116 (DTEEELIEAFKVFDRDGNGFISAAELRHVMTNLGEK), and 117-149 (LTDEEVDEMIREADVDGDGQINYEEFVKMMMAK). Ca(2+)-binding residues include D21, D23, D25, T27, E32, D57, D59, N61, T63, E68, D94, D96, N98, and E105. K116 carries the post-translational modification N6,N6,N6-trimethyllysine. The Ca(2+) site is built by D130, D132, D134, Q136, and E141.

The protein belongs to the calmodulin family.

In terms of biological role, calmodulin mediates the control of a large number of enzymes, ion channels and other proteins by Ca(2+). Among the enzymes to be stimulated by the calmodulin-Ca(2+) complex are a number of protein kinases and phosphatases. This chain is Calmodulin, found in Heterocapsa triquetra (Dinoflagellate).